The chain runs to 172 residues: Shikimate kinase (172 aa).

Residue 11-16 coordinates ATP; the sequence is GAGKST. Position 15 (S15) interacts with Mg(2+). Substrate is bound by residues D33, R57, and G79. ATP is bound at residue R117. R136 serves as a coordination point for substrate. Position 153 (R153) interacts with ATP.

It belongs to the shikimate kinase family. Monomer. Requires Mg(2+) as cofactor.

Its subcellular location is the cytoplasm. The enzyme catalyses shikimate + ATP = 3-phosphoshikimate + ADP + H(+). The protein operates within metabolic intermediate biosynthesis; chorismate biosynthesis; chorismate from D-erythrose 4-phosphate and phosphoenolpyruvate: step 5/7. Catalyzes the specific phosphorylation of the 3-hydroxyl group of shikimic acid using ATP as a cosubstrate. This Pseudomonas entomophila (strain L48) protein is Shikimate kinase.